Reading from the N-terminus, the 166-residue chain is MFDGIGFMELLLIGVLGLVVLGPERLPVAVRSITSWIRAMKRMANSVKEELEQELKIEQLHADLKKAESKGLSNLSPELKESIEQLKQAAQSVNRPYQVQDPVKDTPAPENQIHSPVASTVQTSPAQASQANPTATVEASPTSASPATPSEPSQGADTRSNPKANG.

A helical transmembrane segment spans residues 2–22 (FDGIGFMELLLIGVLGLVVLG). Positions 69 to 166 (SKGLSNLSPE…DTRSNPKANG (98 aa)) are disordered. Composition is skewed to polar residues over residues 88 to 97 (QAAQSVNRPY) and 112 to 132 (QIHSPVASTVQTSPAQASQAN). The span at 133–153 (PTATVEASPTSASPATPSEPS) shows a compositional bias: low complexity. The span at 155–166 (GADTRSNPKANG) shows a compositional bias: polar residues.

The protein belongs to the TatB family. In terms of assembly, the Tat system comprises two distinct complexes: a TatABC complex, containing multiple copies of TatA, TatB and TatC subunits, and a separate TatA complex, containing only TatA subunits. Substrates initially bind to the TatABC complex, which probably triggers association of the separate TatA complex to form the active translocon.

Its subcellular location is the cell inner membrane. In terms of biological role, part of the twin-arginine translocation (Tat) system that transports large folded proteins containing a characteristic twin-arginine motif in their signal peptide across membranes. Together with TatC, TatB is part of a receptor directly interacting with Tat signal peptides. TatB may form an oligomeric binding site that transiently accommodates folded Tat precursor proteins before their translocation. The chain is Sec-independent protein translocase protein TatB from Shewanella baltica (strain OS223).